The chain runs to 278 residues: 4-hydroxy-3-methylbut-2-enyl diphosphate reductase (278 aa).

Cys-12 lines the [4Fe-4S] cluster pocket. 2 residues coordinate (2E)-4-hydroxy-3-methylbut-2-enyl diphosphate: His-40 and His-75. His-40 and His-75 together coordinate dimethylallyl diphosphate. 2 residues coordinate isopentenyl diphosphate: His-40 and His-75. Position 97 (Cys-97) interacts with [4Fe-4S] cluster. His-125 lines the (2E)-4-hydroxy-3-methylbut-2-enyl diphosphate pocket. Residue His-125 coordinates dimethylallyl diphosphate. His-125 lines the isopentenyl diphosphate pocket. Glu-127 acts as the Proton donor in catalysis. Thr-157 contacts (2E)-4-hydroxy-3-methylbut-2-enyl diphosphate. Cys-187 is a binding site for [4Fe-4S] cluster. The (2E)-4-hydroxy-3-methylbut-2-enyl diphosphate site is built by Ser-215, Ser-216, Asn-217, and Ser-258. Residues Ser-215, Ser-216, Asn-217, and Ser-258 each contribute to the dimethylallyl diphosphate site. Isopentenyl diphosphate contacts are provided by Ser-215, Ser-216, Asn-217, and Ser-258.

Belongs to the IspH family. Requires [4Fe-4S] cluster as cofactor.

It catalyses the reaction isopentenyl diphosphate + 2 oxidized [2Fe-2S]-[ferredoxin] + H2O = (2E)-4-hydroxy-3-methylbut-2-enyl diphosphate + 2 reduced [2Fe-2S]-[ferredoxin] + 2 H(+). The catalysed reaction is dimethylallyl diphosphate + 2 oxidized [2Fe-2S]-[ferredoxin] + H2O = (2E)-4-hydroxy-3-methylbut-2-enyl diphosphate + 2 reduced [2Fe-2S]-[ferredoxin] + 2 H(+). It functions in the pathway isoprenoid biosynthesis; dimethylallyl diphosphate biosynthesis; dimethylallyl diphosphate from (2E)-4-hydroxy-3-methylbutenyl diphosphate: step 1/1. The protein operates within isoprenoid biosynthesis; isopentenyl diphosphate biosynthesis via DXP pathway; isopentenyl diphosphate from 1-deoxy-D-xylulose 5-phosphate: step 6/6. Catalyzes the conversion of 1-hydroxy-2-methyl-2-(E)-butenyl 4-diphosphate (HMBPP) into a mixture of isopentenyl diphosphate (IPP) and dimethylallyl diphosphate (DMAPP). Acts in the terminal step of the DOXP/MEP pathway for isoprenoid precursor biosynthesis. This is 4-hydroxy-3-methylbut-2-enyl diphosphate reductase from Pseudothermotoga lettingae (strain ATCC BAA-301 / DSM 14385 / NBRC 107922 / TMO) (Thermotoga lettingae).